Consider the following 658-residue polypeptide: MVTMKLFALVLLVSASVFASDDDDKKDDIGTVVGIDLGTTYSCVGVFKNGRVEIIANDQGNRITPSYVAFTPEGERLIGDAAKNQLTSNPENTVFDAKRLIGRTWNDPSVQQDIKYLPFKVIEKKTKPYIEVDIGDQMKTFAPEEISAMVLVKMKETAEAYLGRKVTHAVVTVPAYFNDAQRQATKDAGTIAGLNVMRIINEPTAAAIAYGLDKKEGEKNILVFDLGGGTFDVSLLTIDNGVFEVVATNGDTHLGGEDFDQRVMEHFIKLYKKKTGKDVRADKRAVQKLRREVEKAKRALSAQHQSRIEIESFFEGEDFSETLTRAKFEELNMDLFRSTMKPVQKVLDDSDLKKSDIDEIVLVGGSTRIPKIQQLVKELFNGKEPSRGINPDEAVAYGAAVQAGVLSGDQDTGDLVLLDVCPLTLGIETVGGVMTKLIPRNTVVPTKKSQIFSTASDNQPTVTIKVYEGERPLTKDNHLLGTFDLTGIPPAPRGVPQIEVTFEIDVNGILRVTAEDKGTGNKNKITITNDQNRLTPEEIERMVTDAEKFAEEDKKLKERIDTRNELESYAYSLKNQIGDKEKLGGKLSSEDKETIEKAVEEKIEWLESHQDADIEDFKAKKKELEEIVQPIVGKLYGGAGAPPPEGAEGAEETEKDEL.

The first 19 residues, 1 to 19, serve as a signal peptide directing secretion; the sequence is MVTMKLFALVLLVSASVFA. ATP contacts are provided by residues 38–41, K98, 228–230, 294–301, and 365–368; these read GTTY, GGT, EKAKRALS, and GSTR. Positions 127-281 are nucleotide-binding (NBD); it reads KPYIEVDIGD…KKKTGKDVRA (155 aa). The segment at 410–420 is interdomain linker; sequence QDTGDLVLLDV. The tract at residues 421–501 is substrate-binding (SBD); sequence CPLTLGIETV…PRGVPQIEVT (81 aa). The interval 634–658 is disordered; sequence KLYGGAGAPPPEGAEGAEETEKDEL. The segment covering 648-658 has biased composition (acidic residues); it reads EGAEETEKDEL. The Prevents secretion from ER motif lies at 655-658; that stretch reads KDEL.

Belongs to the heat shock protein 70 family. As to quaternary structure, monomer and homooligomer; homooligomerization via the interdomain linker inactivates the chaperone activity and acts as a storage of hspa5/BiP molecules. Interacts with DNAJC10. Interacts with dnajb9/ERdj4; leading to recruit hspa5/BiP to ern1/ire1. Interacts with ern1/ire1; interaction takes place following interaction with dnajb9/ERdj4 and leads to inactivate ern1/IRE1.

It localises to the endoplasmic reticulum lumen. It carries out the reaction ATP + H2O = ADP + phosphate + H(+). With respect to regulation, the chaperone activity is regulated by ATP-induced allosteric coupling of the nucleotide-binding (NBD) and substrate-binding (SBD) domains. In the ADP-bound and nucleotide-free (apo) states, the two domains have little interaction. In contrast, in the ATP-bound state the two domains are tightly coupled, which results in drastically accelerated kinetics in both binding and release of polypeptide substrates. J domain-containing co-chaperones (dnajb9/ERdj4 or dnajc10/ERdj5) stimulate the ATPase activity and are required for efficient substrate recognition by hspa5/BiP. Homooligomerization inactivates participating hspa5/BiP protomers and probably act as reservoirs to store hspa5/BiP molecules when they are not needed by the cell. Functionally, endoplasmic reticulum chaperone that plays a key role in protein folding and quality control in the endoplasmic reticulum lumen. Involved in the correct folding of proteins and degradation of misfolded proteins via its interaction with dnajc10/ERdj5, probably to facilitate the release of dnajc10/ERdj5 from its substrate. Acts as a key repressor of the EIF2AK3/PERK and ERN1/IRE1-mediated unfolded protein response (UPR). In the unstressed endoplasmic reticulum, recruited by DNAJB9/ERdj4 to the luminal region of ERN1/IRE1, leading to disrupt the dimerization of ERN1/IRE1, thereby inactivating ERN1/IRE1. Also binds and inactivates EIF2AK3/PERK in unstressed cells. Accumulation of misfolded protein in the endoplasmic reticulum causes release of HSPA5/BiP from ERN1/IRE1 and EIF2AK3/PERK, allowing their homodimerization and subsequent activation. The polypeptide is Endoplasmic reticulum chaperone BiP (Xenopus laevis (African clawed frog)).